We begin with the raw amino-acid sequence, 521 residues long: Cytochrome P450 monooxygenase gloO (521 aa).

The first 26 residues, 1 to 26, serve as a signal peptide directing secretion; that stretch reads MIAALFTTNLQLGAVGVFIFALLAFA. Position 464 (Cys-464) interacts with heme.

Belongs to the cytochrome P450 family. Heme is required as a cofactor.

It functions in the pathway mycotoxin biosynthesis. Its function is as follows. Cytochrome P450 monooxygenase; part of the gene cluster that mediates the biosynthesis of pneumocandins, lipohexapeptides of the echinocandin family that prevent fungal cell wall formation by non-competitive inhibition of beta-1,3-glucan synthase. The 10,12-dimethylmyristoyl side chain is synthesized by the reducing polyketide synthase gloL/GLPKS4. The thioesterase gloN/GLHYD exclusively interacts with gloL/GLPKS4 to maintain turnover of the polyketide side chain. The 10R,12S-dimethylmyristic acid is then transferred to the first thiolation domain of the nonribosomal peptide synthetase gloA/GLNRPS4 by the acyl-AMP ligase gloD/GLligase, followed by its acylation to L-ornithine to trigger elongation of the cyclic hexapeptide. L-ornithine, 4R-hydroxyl-L-proline (generated from L-proline by the dioxygenase gloF/GLOXY2), 3S-hydroxyl-L-homotyrosine (generated by gloG/GLHtyB, gloH/GLHtyA, gloI/GLHtyC, gloJ/GLHtyD and hydroxylated at C-3 by the dioxygenase gloM/GLOXY1), 3R-hydroxyl-L-glutamine (generated from L-glutamine probably by the dioxygenase gloE/GLOXY3) and 3S-hydroxyl-L-proline (generated from L-proline by the dioxygenase gloF/GLOXY2 to yield pneumocandin B0), or 3S-hydroxyl-4S-methyl-L-proline (generated from L-leucine by the dioxygenase gloC/GLOXY4 to yield pneumocandin A0) are sequentially added to the growing chain. The last C domain of gloA/GLNRPS4 is proposed to be responsible for cyclization by condensation to form the peptide bond between L-ornithine and 3S-hydroxyl-4S-methyl-L-proline (for pneumocandin A0) or 3S-hydroxyl-L-proline (for pneumocandin B0). Finally, the subsequent C-4 hydroxylation of 3S-hydroxyl-L-homotyrosine and L-ornithine dihydroxylation at C-4 and C-5 are performed by the cytochrome P450 monooxygenases gloP/GLP450-1 and gloO/GLP450-2, respectively. The protein is Cytochrome P450 monooxygenase gloO of Glarea lozoyensis (strain ATCC 20868 / MF5171).